A 691-amino-acid polypeptide reads, in one-letter code: Glycine--tRNA ligase beta subunit (691 aa).

This sequence belongs to the class-II aminoacyl-tRNA synthetase family. In terms of assembly, tetramer of two alpha and two beta subunits.

The protein resides in the cytoplasm. The enzyme catalyses tRNA(Gly) + glycine + ATP = glycyl-tRNA(Gly) + AMP + diphosphate. This is Glycine--tRNA ligase beta subunit from Limosilactobacillus reuteri (strain DSM 20016) (Lactobacillus reuteri).